A 371-amino-acid chain; its full sequence is Alanine dehydrogenase (371 aa).

Substrate contacts are provided by arginine 15 and lysine 74. Residue histidine 95 is the Proton donor/acceptor of the active site. NAD(+) is bound by residues serine 133, 177–178 (QA), aspartate 197, serine 219, 238–239 (VL), 266–269 (IAID), and 298–301 (VANM). Aspartate 269 functions as the Proton donor/acceptor in the catalytic mechanism.

This sequence belongs to the AlaDH/PNT family. In terms of assembly, homohexamer. Trimer of dimer.

It catalyses the reaction L-alanine + NAD(+) + H2O = pyruvate + NH4(+) + NADH + H(+). It functions in the pathway amino-acid degradation; L-alanine degradation via dehydrogenase pathway; NH(3) and pyruvate from L-alanine: step 1/1. Its function is as follows. Catalyzes the reversible reductive amination of pyruvate to L-alanine. May play a role in cell wall synthesis as L-alanine is an important constituent of the peptidoglycan layer. The chain is Alanine dehydrogenase (ald) from Staphylococcus epidermidis (strain ATCC 35984 / DSM 28319 / BCRC 17069 / CCUG 31568 / BM 3577 / RP62A).